The following is a 246-amino-acid chain: NAD-dependent protein deacylase (246 aa).

The Deacetylase sirtuin-type domain occupies 1-245 (MKEFITKHRD…ELIREILDNP (245 aa)). 20-39 (GAGISAESGIPTFRGSEGLW) lines the NAD(+) pocket. Substrate contacts are provided by Tyr64 and Arg67. 98–101 (QNVD) serves as a coordination point for NAD(+). Catalysis depends on His116, which acts as the Proton acceptor. Cys124, Cys127, Cys146, and Cys149 together coordinate Zn(2+). Residues 186–188 (GTS), 212–214 (NPE), and Thr230 contribute to the NAD(+) site.

Belongs to the sirtuin family. Class III subfamily. Zn(2+) is required as a cofactor.

It is found in the cytoplasm. It catalyses the reaction N(6)-acetyl-L-lysyl-[protein] + NAD(+) + H2O = 2''-O-acetyl-ADP-D-ribose + nicotinamide + L-lysyl-[protein]. The catalysed reaction is N(6)-succinyl-L-lysyl-[protein] + NAD(+) + H2O = 2''-O-succinyl-ADP-D-ribose + nicotinamide + L-lysyl-[protein]. Its function is as follows. NAD-dependent lysine deacetylase and desuccinylase that specifically removes acetyl and succinyl groups on target proteins. Modulates the activities of several proteins which are inactive in their acylated form. The chain is NAD-dependent protein deacylase from Leptospira interrogans serogroup Icterohaemorrhagiae serovar copenhageni (strain Fiocruz L1-130).